Consider the following 72-residue polypeptide: Translation initiation factor IF-1 (72 aa).

In terms of domain architecture, S1-like spans 2-72; it reads AKEDVIEVEG…TRGRITYRYK (71 aa). Residue tyrosine 60 is modified to Phosphotyrosine.

This sequence belongs to the IF-1 family. In terms of assembly, component of the 30S ribosomal translation pre-initiation complex which assembles on the 30S ribosome in the order IF-2 and IF-3, IF-1 and N-formylmethionyl-tRNA(fMet); mRNA recruitment can occur at any time during PIC assembly.

Its subcellular location is the cytoplasm. Its function is as follows. One of the essential components for the initiation of protein synthesis. Stabilizes the binding of IF-2 and IF-3 on the 30S subunit to which N-formylmethionyl-tRNA(fMet) subsequently binds. Helps modulate mRNA selection, yielding the 30S pre-initiation complex (PIC). Upon addition of the 50S ribosomal subunit IF-1, IF-2 and IF-3 are released leaving the mature 70S translation initiation complex. This chain is Translation initiation factor IF-1, found in Halalkalibacterium halodurans (strain ATCC BAA-125 / DSM 18197 / FERM 7344 / JCM 9153 / C-125) (Bacillus halodurans).